The chain runs to 33 residues: Cytochrome c oxidase subunit 5B liver, mitochondrial (33 aa).

Belongs to the cytochrome c oxidase subunit 5B family. Component of the cytochrome c oxidase (complex IV, CIV), a multisubunit enzyme composed of 14 subunits. The complex is composed of a catalytic core of 3 subunits MT-CO1, MT-CO2 and MT-CO3, encoded in the mitochondrial DNA, and 11 supernumerary subunits COX4I, COX5A, COX5B, COX6A, COX6B, COX6C, COX7A, COX7B, COX7C, COX8 and NDUFA4, which are encoded in the nuclear genome. The complex exists as a monomer or a dimer and forms supercomplexes (SCs) in the inner mitochondrial membrane with NADH-ubiquinone oxidoreductase (complex I, CI) and ubiquinol-cytochrome c oxidoreductase (cytochrome b-c1 complex, complex III, CIII), resulting in different assemblies (supercomplex SCI(1)III(2)IV(1) and megacomplex MCI(2)III(2)IV(2)).

Its subcellular location is the mitochondrion inner membrane. Its pathway is energy metabolism; oxidative phosphorylation. Component of the cytochrome c oxidase, the last enzyme in the mitochondrial electron transport chain which drives oxidative phosphorylation. The respiratory chain contains 3 multisubunit complexes succinate dehydrogenase (complex II, CII), ubiquinol-cytochrome c oxidoreductase (cytochrome b-c1 complex, complex III, CIII) and cytochrome c oxidase (complex IV, CIV), that cooperate to transfer electrons derived from NADH and succinate to molecular oxygen, creating an electrochemical gradient over the inner membrane that drives transmembrane transport and the ATP synthase. Cytochrome c oxidase is the component of the respiratory chain that catalyzes the reduction of oxygen to water. Electrons originating from reduced cytochrome c in the intermembrane space (IMS) are transferred via the dinuclear copper A center (CU(A)) of subunit 2 and heme A of subunit 1 to the active site in subunit 1, a binuclear center (BNC) formed by heme A3 and copper B (CU(B)). The BNC reduces molecular oxygen to 2 water molecules using 4 electrons from cytochrome c in the IMS and 4 protons from the mitochondrial matrix. This Oncorhynchus mykiss (Rainbow trout) protein is Cytochrome c oxidase subunit 5B liver, mitochondrial.